The primary structure comprises 446 residues: Exodeoxyribonuclease 7 large subunit (446 aa).

Belongs to the XseA family. As to quaternary structure, heterooligomer composed of large and small subunits.

The protein localises to the cytoplasm. It catalyses the reaction Exonucleolytic cleavage in either 5'- to 3'- or 3'- to 5'-direction to yield nucleoside 5'-phosphates.. Bidirectionally degrades single-stranded DNA into large acid-insoluble oligonucleotides, which are then degraded further into small acid-soluble oligonucleotides. The protein is Exodeoxyribonuclease 7 large subunit of Streptococcus pyogenes serotype M3 (strain ATCC BAA-595 / MGAS315).